A 110-amino-acid polypeptide reads, in one-letter code: Single-stranded DNA-binding protein 1 (110 aa).

One can recognise an SSB domain in the interval 1 to 104 (MNKILLIGRM…VVGEEVQFLE (104 aa)).

Homotetramer.

This chain is Single-stranded DNA-binding protein 1 (ssb1), found in Clostridium acetobutylicum (strain ATCC 824 / DSM 792 / JCM 1419 / IAM 19013 / LMG 5710 / NBRC 13948 / NRRL B-527 / VKM B-1787 / 2291 / W).